Reading from the N-terminus, the 64-residue chain is Cold shock protein CapA (64 aa).

Residues 7 to 64 (GTVKWFNDEKGFGFITPQGGGDDLFVHFKAIESDGFKSLKEGQTVSFVAEKGQKGMQA) form the CSD domain.

It localises to the cytoplasm. Functionally, affects cell viability at low temperatures. This Pseudomonas fragi protein is Cold shock protein CapA (capA).